Here is a 94-residue protein sequence, read N- to C-terminus: HssA/B-like protein 51 (94 aa).

A disordered region spans residues 1–25; sequence MTLFSSISSISNPMTNSKSRISSFG.

The protein belongs to the hssA/B family.

This is HssA/B-like protein 51 (hssl51) from Dictyostelium discoideum (Social amoeba).